The primary structure comprises 1343 residues: ABC multidrug transporter atrD (1343 aa).

The span at 1-10 (MSPLETNPLS) shows a compositional bias: polar residues. Residues 1 to 67 (MSPLETNPLS…HRPKSSSSNN (67 aa)) form a disordered region. Low complexity predominate over residues 20–31 (ETSTTEEQASTP). Residue Asn-99 is glycosylated (N-linked (GlcNAc...) asparagine). 4 helical membrane passes run 114–134 (ILIM…LPLF), 163–183 (YFVY…VGFI), 235–255 (KVGL…IAYV), and 263–283 (ICSS…QFII). The ABC transmembrane type-1 1 domain occupies 115–403 (LIMVISTICA…VSPNAQAFTN (289 aa)). The N-linked (GlcNAc...) asparagine glycan is linked to Asn-309. 2 helical membrane-spanning segments follow: residues 339–359 (IVMG…YGLG) and 366–386 (FLVD…AILI). The 246-residue stretch at 438-683 (IELRNVKHIY…GGAYRKLVEA (246 aa)) folds into the ABC transporter 1 domain. 473-480 (GPSGSGKS) is a binding site for ATP. Asn-545 carries an N-linked (GlcNAc...) asparagine glycan. 2 helical membrane-spanning segments follow: residues 773-793 (MLIG…QAVL) and 820-840 (LMFF…GAAF). An ABC transmembrane type-1 2 domain is found at 774–1063 (LIGLVFSVLA…VFSFAPDMGK (290 aa)). N-linked (GlcNAc...) asparagine glycosylation is present at Asn-872. 4 consecutive transmembrane segments (helical) span residues 887–907 (HLSG…TTLG), 920–942 (LALV…FYML), 1010–1030 (ALVF…LGHH), and 1037–1057 (FFVC…VFSF). The N-linked (GlcNAc...) asparagine glycan is linked to Asn-1083. The ABC transporter 2 domain maps to 1098–1336 (IEFRNVHFRY…KGRYYELVNL (239 aa)). 1133–1140 (GPSGCGKS) is an ATP binding site.

The protein belongs to the ABC transporter superfamily. ABCB family. Multidrug resistance exporter (TC 3.A.1.201) subfamily.

It localises to the cell membrane. With respect to regulation, fenamirol efflux transporter activity is inhibited by the cyclosporin derivative PSC 833, nigericin, reserpine and valinomycin. The effect of reserpine is transiant, while that of the cyclosporin derivative PSC 833, nigericin and valinomycin is proportional to the time of exposure. Cyclohexinmide has inhibitory effect only when applied prior to addition of the fungicide. Functionally, pleiotropic ABC efflux transporter involved in the protection of the cells against a wide range of toxic compounds. Confers resistance to the azole fenarimol via efflux transport. May also be involved in the secretion of penicillin. The protein is ABC multidrug transporter atrD of Emericella nidulans (strain FGSC A4 / ATCC 38163 / CBS 112.46 / NRRL 194 / M139) (Aspergillus nidulans).